The sequence spans 111 residues: Dynein light chain Tctex-type (111 aa).

The protein belongs to the dynein light chain Tctex-type family.

The protein resides in the cytoplasm. The protein localises to the cytoskeleton. In terms of biological role, acts as a non-catalytic accessory component of a dynein complex. The sequence is that of Dynein light chain Tctex-type (dlcA) from Dictyostelium discoideum (Social amoeba).